Here is a 470-residue protein sequence, read N- to C-terminus: Cysteine--tRNA ligase (470 aa).

Cysteine 28 lines the Zn(2+) pocket. A 'HIGH' region motif is present at residues 30–40 (PTVYNYIHIGN). Zn(2+) contacts are provided by cysteine 212, histidine 237, and glutamate 241. A 'KMSKS' region motif is present at residues 271-275 (KMSKS). Lysine 274 lines the ATP pocket.

It belongs to the class-I aminoacyl-tRNA synthetase family. In terms of assembly, monomer. Zn(2+) serves as cofactor.

It is found in the cytoplasm. The catalysed reaction is tRNA(Cys) + L-cysteine + ATP = L-cysteinyl-tRNA(Cys) + AMP + diphosphate. This is Cysteine--tRNA ligase from Limosilactobacillus reuteri (strain DSM 20016) (Lactobacillus reuteri).